Reading from the N-terminus, the 347-residue chain is MILISDATLRDGNHAIRHQLSAAQIHAYARAADEAGIDVVEVGHGNGLGGSSCLLGQTPIGDRLMLETARAALRTSRLGVHFIPGLGKAADISLALEIGVDVVRVATHCTEANVSARFIEQTRTAGRTAFGVLMMSHMAPPDTLLAQAKLMERYGAQAVVLMDSAGYSTPSLVRAKVERLVDGLDIDVGFHAHNNLGLAVANSLVALEAGARIVDACVKGFGAGAGNTQLETLVAAMEREGHDTRTTFERVMTLARGTETFLNPKTPHIQPANIASGLYGLFSGYVPHIQKAAQEFGVNEFELYKRLAERKLVAGQEDIIIEEASRLARERDVQRATGGVRVRELSA.

The Pyruvate carboxyltransferase domain maps to 2–252 (ILISDATLRD…DTRTTFERVM (251 aa)). 10-11 (RD) contacts substrate. Position 11 (D11) interacts with Mn(2+). H14 acts as the Proton acceptor in catalysis. Substrate-binding residues include S164 and H191. Positions 191 and 193 each coordinate Mn(2+).

The protein belongs to the 4-hydroxy-2-oxovalerate aldolase family.

It catalyses the reaction (S)-4-hydroxy-2-oxopentanoate = acetaldehyde + pyruvate. This Burkholderia pseudomallei (strain 1106a) protein is 4-hydroxy-2-oxovalerate aldolase.